Here is a 457-residue protein sequence, read N- to C-terminus: MSVQQIDWDLALIQKYNYSGPRYTSYPTALEFSEDFGEQAFLQAVARYPERPLSLYVHIPFCHKLCYFCGCNKIVTRQQHKADQYLDALEQEIVHRAPLFAGRHVSQLHWGGGTPTYLNKAQISRLMKLLRENFQFNADAEISIEVDPREIELDVLDHLRAEGFNRLSMGVQDFNKEVQRLVNREQDEEFIFALLNHAREIGFTSTNIDLIYGLPKQTPESFAFTLKRVAELNPDRLSVFNYAHLPTIFAAQRKIKDADLPSPQQKLDILQETIAFLTQSGYQFIGMDHFARPDDELAVAQREGVLHRNFQGYTTQGDTDLLGMGVSAISMIGDCYAQNQKELKQYYQQVDEQGNALWRGIALTRDDCIRRDVIKSLICNFRLDYAPIEKQWDLHFADYFAEDLKLLAPLAKDGLVDVDEKGIQVTAKGRLLIRNICMCFDTYLRQKARMQQFSRVI.

The region spanning Arg47–Ser280 is the Radical SAM core domain. Tyr56 lines the S-adenosyl-L-methionine pocket. [4Fe-4S] cluster contacts are provided by Cys62, Cys66, and Cys69. Residues Phe68–Gly70, Gly112, Gly113–Thr114, Glu145, Gln172, Arg184, Asp209, Ala243, and Ile329 contribute to the S-adenosyl-L-methionine site.

It belongs to the anaerobic coproporphyrinogen-III oxidase family. As to quaternary structure, monomer. The cofactor is [4Fe-4S] cluster.

The protein localises to the cytoplasm. The catalysed reaction is coproporphyrinogen III + 2 S-adenosyl-L-methionine = protoporphyrinogen IX + 2 5'-deoxyadenosine + 2 L-methionine + 2 CO2. Its pathway is porphyrin-containing compound metabolism; protoporphyrin-IX biosynthesis; protoporphyrinogen-IX from coproporphyrinogen-III (AdoMet route): step 1/1. With respect to regulation, inhibited by EDTA. In terms of biological role, involved in the heme biosynthesis. Catalyzes the anaerobic oxidative decarboxylation of propionate groups of rings A and B of coproporphyrinogen III to yield the vinyl groups in protoporphyrinogen IX. It can use NAD or NADP, but NAD is preferred. The sequence is that of Oxygen-independent coproporphyrinogen III oxidase (hemN) from Escherichia coli (strain K12).